The chain runs to 424 residues: Histidine--tRNA ligase (424 aa).

Belongs to the class-II aminoacyl-tRNA synthetase family. As to quaternary structure, homodimer.

It is found in the cytoplasm. The enzyme catalyses tRNA(His) + L-histidine + ATP = L-histidyl-tRNA(His) + AMP + diphosphate + H(+). The chain is Histidine--tRNA ligase from Pectobacterium carotovorum subsp. carotovorum (strain PC1).